The primary structure comprises 20 residues: Antiviral protein Y3 (20 aa).

In Pleurotus citrinopileatus (Golden oyster mushroom), this protein is Antiviral protein Y3.